We begin with the raw amino-acid sequence, 1174 residues long: Nucleolar complex protein 1 (1174 aa).

6 disordered regions span residues Met1 to Ile20, Val29 to Gln237, Tyr715 to Ser742, Ala893 to Gly922, Gly944 to Ser1085, and Val1116 to His1174. Over residues Asn33–Ala63 the composition is skewed to basic and acidic residues. The segment covering Ala95 to Lys104 has biased composition (polar residues). 2 stretches are compositionally biased toward basic and acidic residues: residues Lys113–His122 and Lys176–Ala200. Acidic residues-rich tracts occupy residues Ser207–Gly216 and Tyr715–Asp724. Composition is skewed to basic and acidic residues over residues Thr725 to Val739 and Lys897 to Ala906. Acidic residues-rich tracts occupy residues Glu907–Glu916, Val945–Leu954, Ala981–Ser1038, and Asp1048–Asp1065. Residues Asn1127–Arg1143 show a composition bias toward basic and acidic residues. Low complexity predominate over residues Gly1156 to Gln1166.

It belongs to the CBF/MAK21 family.

It is found in the nucleus. The protein resides in the nucleolus. Functionally, involved in rRNA processing and ribosome maturation. May also act as a transcription factor. The chain is Nucleolar complex protein 1 from Drosophila melanogaster (Fruit fly).